The sequence spans 551 residues: Cysteine desulfurase SufS (551 aa).

The signal sequence occupies residues 1 to 22 (MRPSSAAWICLLLRIANYTCYS). K327 is modified (N6-(pyridoxal phosphate)lysine). C500 serves as the catalytic Cysteine persulfide intermediate.

It belongs to the class-V pyridoxal-phosphate-dependent aminotransferase family. Csd subfamily. In terms of assembly, monomer. Interacts with SufE; interaction enhances cysteine desulfurase activity of SufS. Pyridoxal 5'-phosphate serves as cofactor.

It localises to the plastid. The protein resides in the apicoplast. It catalyses the reaction (sulfur carrier)-H + L-cysteine = (sulfur carrier)-SH + L-alanine. Its pathway is cofactor biosynthesis; iron-sulfur cluster biosynthesis. Catalyzes sulfur activation and mobilization in sulfur mobilization (SUF) pathway for iron-sulfur (Fe-S) cluster biogenesis. Active when in complex with a partner protein SufE. Required for apicoplast maintenance. Plays a role in the development of sporozoites in oocysts in mosquitoes. This chain is Cysteine desulfurase SufS, found in Plasmodium vivax.